Consider the following 240-residue polypeptide: Ribonuclease 3 (240 aa).

Positions 9-141 (VEEFQKKTGI…LLAAIYLDQG (133 aa)) constitute an RNase III domain. E54 is a binding site for Mg(2+). D58 is an active-site residue. Mg(2+)-binding residues include D127 and E130. E130 is an active-site residue. The 70-residue stretch at 168–237 (DYKTALQEIV…ARIAYEKLLK (70 aa)) folds into the DRBM domain.

This sequence belongs to the ribonuclease III family. Homodimer. Mg(2+) serves as cofactor.

The protein resides in the cytoplasm. The enzyme catalyses Endonucleolytic cleavage to 5'-phosphomonoester.. Functionally, digests double-stranded RNA. Involved in the processing of primary rRNA transcript to yield the immediate precursors to the large and small rRNAs (23S and 16S). Processes some mRNAs, and tRNAs when they are encoded in the rRNA operon. Processes pre-crRNA and tracrRNA of type II CRISPR loci if present in the organism. This is Ribonuclease 3 from Thermotoga sp. (strain RQ2).